A 165-amino-acid polypeptide reads, in one-letter code: Coatomer subunit zeta (165 aa).

It belongs to the adaptor complexes small subunit family. In terms of assembly, oligomeric complex that consists of at least the alpha, beta, beta', gamma, delta, epsilon and zeta subunits.

It is found in the cytoplasm. The protein localises to the golgi apparatus membrane. Its subcellular location is the cytoplasmic vesicle. The protein resides in the COPI-coated vesicle membrane. In terms of biological role, the coatomer is a cytosolic protein complex that binds to dilysine motifs and reversibly associates with Golgi non-clathrin-coated vesicles, which further mediate biosynthetic protein transport from the ER, via the Golgi up to the trans Golgi network. Coatomer complex is required for budding from Golgi membranes, and is essential for the retrograde Golgi-to-ER transport of dilysine-tagged proteins. The zeta subunit may be involved in regulating the coat assembly and, hence, the rate of biosynthetic protein transport due to its association-dissociation properties with the coatomer complex. The sequence is that of Coatomer subunit zeta from Encephalitozoon cuniculi (strain GB-M1) (Microsporidian parasite).